The following is a 192-amino-acid chain: Inosine triphosphate pyrophosphatase (192 aa).

Position 8-13 (T8–K13) interacts with ITP. E34 contacts Mg(2+). Residues K46, D64 to T65, K81, E141 to D144, K164, and H169 to R170 contribute to the ITP site.

This sequence belongs to the HAM1 NTPase family. As to quaternary structure, homodimer. Mg(2+) serves as cofactor. It depends on Mn(2+) as a cofactor.

It is found in the cytoplasm. The protein resides in the nucleus. It catalyses the reaction ITP + H2O = IMP + diphosphate + H(+). It carries out the reaction dITP + H2O = dIMP + diphosphate + H(+). The catalysed reaction is XTP + H2O = XMP + diphosphate + H(+). In terms of biological role, pyrophosphatase that hydrolyzes non-canonical purine nucleotides such as inosine triphosphate (ITP), deoxyinosine triphosphate (dITP) or xanthosine 5'-triphosphate (XTP) to their respective monophosphate derivatives. The enzyme does not distinguish between the deoxy- and ribose forms. Probably excludes non-canonical purines from RNA and DNA precursor pools, thus preventing their incorporation into RNA and DNA and avoiding chromosomal lesions. This Encephalitozoon cuniculi (strain GB-M1) (Microsporidian parasite) protein is Inosine triphosphate pyrophosphatase.